The following is a 342-amino-acid chain: Dihydroorotase (342 aa).

Zn(2+)-binding residues include H13 and H15. Substrate is bound by residues 15–17 (HLR) and N41. Residues K98, H135, and H173 each coordinate Zn(2+). K98 is modified (N6-carboxylysine). H135 is a substrate binding site. Residue L218 participates in substrate binding. Zn(2+) is bound at residue D246. D246 is an active-site residue. Residues H250 and A262 each contribute to the substrate site.

This sequence belongs to the metallo-dependent hydrolases superfamily. DHOase family. Class II DHOase subfamily. Homodimer. Zn(2+) serves as cofactor.

The catalysed reaction is (S)-dihydroorotate + H2O = N-carbamoyl-L-aspartate + H(+). It participates in pyrimidine metabolism; UMP biosynthesis via de novo pathway; (S)-dihydroorotate from bicarbonate: step 3/3. Functionally, catalyzes the reversible cyclization of carbamoyl aspartate to dihydroorotate. In Photobacterium profundum (strain SS9), this protein is Dihydroorotase.